The sequence spans 1980 residues: Unconventional myosin-IXb (1980 aa).

Position 2 is an N-acetylserine (Ser-2). A Ras-associating domain is found at Ala-15 to Ala-114. Residues Ala-146 to His-954 enclose the Myosin motor domain. Position 239 to 246 (Gly-239 to Thr-246) interacts with ATP. A disordered region spans residues Gly-715–Ser-736. Ser-717 and Ser-718 each carry phosphoserine. An actin-binding region spans residues Lys-845–Ser-856. The segment at Leu-941–Phe-1045 is neck or regulatory domain. 4 IQ domains span residues Leu-958–Val-978, Lys-981–Glu-1001, Arg-1002–His-1024, and Gln-1025–Lys-1054. Ser-1046 is modified (phosphoserine). Residues Ser-1046–Glu-1980 are tail. Disordered stretches follow at residues Met-1049–Thr-1281, Ser-1302–Ser-1380, and Asp-1394–Val-1449. The span at Thr-1097–Gly-1106 shows a compositional bias: polar residues. Ser-1108, Ser-1115, and Ser-1177 each carry phosphoserine. Basic and acidic residues-rich tracts occupy residues Glu-1129–Ser-1177 and Glu-1186–Gly-1195. Residues Ser-1220, Ser-1222, Ser-1229, Ser-1237, Ser-1243, and Ser-1247 each carry the phosphoserine modification. A compositionally biased stretch (low complexity) spans Arg-1235–Ser-1247. A compositionally biased stretch (basic and acidic residues) spans Asp-1250 to Glu-1265. Phosphoserine occurs at positions 1266, 1268, and 1304. Thr-1319 is subject to Phosphothreonine. A phosphoserine mark is found at Ser-1327, Ser-1329, and Ser-1337. Over residues Ser-1327–Glu-1344 the composition is skewed to polar residues. Residues Gly-1592 to Cys-1641 form a Phorbol-ester/DAG-type zinc finger. Ser-1649 carries the post-translational modification Phosphoserine. Residues Asp-1663 to Tyr-1848 enclose the Rho-GAP domain. The interval Ala-1699–Arg-1704 is interaction with RHOA. Residues Ile-1841 to Ala-1861 adopt a coiled-coil conformation. The residue at position 1886 (Ser-1886) is a Phosphoserine. The tract at residues Val-1891–Lys-1923 is disordered. Residues Asp-1918–Asp-1948 are a coiled coil. A phosphoserine mark is found at Ser-1932, Ser-1952, and Ser-1959. Residues Lys-1937–Asp-1953 show a composition bias toward basic and acidic residues. Residues Lys-1937–Glu-1980 form a disordered region. Residue Thr-1965 is modified to Phosphothreonine. The segment covering Leu-1969 to Glu-1980 has biased composition (basic and acidic residues).

Belongs to the TRAFAC class myosin-kinesin ATPase superfamily. Myosin family. As to quaternary structure, interacts (via IQ domains) with CALM. Interacts with RHOA. Interacts (via Rho-GAP domain) with ROBO1; this inhibits the interaction with RHOA and the stimulation of RHOA GTPase activity, and thereby increases the levels of active RHOA. As to expression, expressed in testis, lung, thymus, brain, liver, spleen and heart muscle. Detected in lung, testis, spleen and liver, and at reduced level in different brain regions (at protein level).

The protein resides in the cytoplasm. It localises to the cell cortex. Its subcellular location is the perinuclear region. It is found in the cytoskeleton. Myosins are actin-based motor molecules with ATPase activity. Unconventional myosins serve in intracellular movements. Binds actin with high affinity both in the absence and presence of ATP and its mechanochemical activity is inhibited by calcium ions. Also acts as a GTPase activator for RHOA. Plays a role in the regulation of cell migration via its role as RHOA GTPase activator. This is regulated by its interaction with the SLIT2 receptor ROBO1; interaction with ROBO1 impairs interaction with RHOA and subsequent activation of RHOA GTPase activity, and thereby leads to increased levels of active, GTP-bound RHOA. This is Unconventional myosin-IXb (Myo9b) from Rattus norvegicus (Rat).